A 333-amino-acid polypeptide reads, in one-letter code: Ribokinase (333 aa).

Substrate is bound by residues 10 to 12 (NYD), 38 to 42 (GKGLN), and E149. ATP contacts are provided by residues N193 and 248-253 (TLGSRG). Residues D277 and T279 each contribute to the K(+) site. 282-283 (GD) contributes to the ATP binding site. A substrate-binding site is contributed by D283. D283 functions as the Proton acceptor in the catalytic mechanism. The K(+) site is built by T313, R316, G318, and S322.

Belongs to the carbohydrate kinase PfkB family. Ribokinase subfamily. Homodimer. The cofactor is Mg(2+).

The protein resides in the cytoplasm. Its subcellular location is the nucleus. The catalysed reaction is D-ribose + ATP = D-ribose 5-phosphate + ADP + H(+). Its pathway is carbohydrate metabolism; D-ribose degradation; D-ribose 5-phosphate from beta-D-ribopyranose: step 2/2. Its activity is regulated as follows. Activated by a monovalent cation that binds near, but not in, the active site. The most likely occupant of the site in vivo is potassium. Ion binding induces a conformational change that may alter substrate affinity. In terms of biological role, catalyzes the phosphorylation of ribose at O-5 in a reaction requiring ATP and magnesium. The resulting D-ribose-5-phosphate can then be used either for sythesis of nucleotides, histidine, and tryptophan, or as a component of the pentose phosphate pathway. The protein is Ribokinase of Saccharomyces cerevisiae (strain ATCC 204508 / S288c) (Baker's yeast).